Consider the following 147-residue polypeptide: Plasminogen receptor (KT) (147 aa).

Residues 1–52 (MGFIFSKSMNESMKNQKEFMLMNARLQLERQLIMQSEMRERQMAMQIAWSRE) lie on the Extracellular side of the membrane. The helical transmembrane segment at 53–73 (FLKYFGTFFGLAAISLTAGAI) threads the bilayer. At 74-78 (KKKKP) the chain is on the cytoplasmic side. The helical transmembrane segment at 79–99 (AFLVPIVPLSFILTYQYDLGY) threads the bilayer. The Extracellular portion of the chain corresponds to 100–147 (GTLLERMKGEAEDILETEKSKLQLPRGMITFESIEKARKEQSRFFIDK).

Interacts with PLAT and PLAUR. In terms of tissue distribution, expressed in peripheral blood cells and monocytes. Expressed in adrenal medulla.

It localises to the cell membrane. Its function is as follows. Receptor for plasminogen. Regulates urokinase plasminogen activator-dependent and stimulates tissue-type plasminogen activator-dependent cell surface plasminogen activation. Proposed to be part of a local catecholaminergic cell plasminogen activation system that regulates neuroendocrine prohormone processing. Involved in regulation of inflammatory response; regulates monocyte chemotactic migration and matrix metalloproteinase activation, such as of MMP2 and MMP9. This is Plasminogen receptor (KT) (PLGRKT) from Homo sapiens (Human).